A 943-amino-acid polypeptide reads, in one-letter code: Zinc finger BED domain-containing protein 39 (943 aa).

The disordered stretch occupies residues 1-99 (MSSVSSDIDG…DIAMDVSGST (99 aa)). Residues 12 to 21 (PETKRFRIDV) are compositionally biased toward basic and acidic residues. Positions 50 to 72 (SPAAPSSASYRSSNSSVISSSES) are enriched in low complexity. Positions 73-85 (PIKDEDVDVHDGQ) are enriched in basic and acidic residues. The BED-type; degenerate zinc-finger motif lies at 184 to 235 (NKQTPVWKYFVYNKTENLSRCIVGDCTYMLKGPHTSTLACHLKKHTREYSEF). 2 disordered regions span residues 242–315 (YSRT…KEPS) and 328–348 (RQATNNSNGSPPTTPHAPQLP). Residues 262-276 (TLQTQNTPRQTGSPA) are compositionally biased toward polar residues. A compositionally biased stretch (low complexity) spans 277–292 (STCNTNSNTSSSVSSG). Residues 328–338 (RQATNNSNGSP) are compositionally biased toward polar residues.

Expressed in distal tip cells and in germline cells.

The protein resides in the nucleus. Its subcellular location is the cytoplasm. Regulates the timing and orientation of distal tip cell migration during gonadal development. May act in parallel to cacn-1 and Rac GTPases to control the anterior and posterior migration of distal tip cells. The protein is Zinc finger BED domain-containing protein 39 of Caenorhabditis elegans.